Consider the following 185-residue polypeptide: Elongation factor P (185 aa).

This sequence belongs to the elongation factor P family.

The protein localises to the cytoplasm. Its pathway is protein biosynthesis; polypeptide chain elongation. Its function is as follows. Involved in peptide bond synthesis. Stimulates efficient translation and peptide-bond synthesis on native or reconstituted 70S ribosomes in vitro. Probably functions indirectly by altering the affinity of the ribosome for aminoacyl-tRNA, thus increasing their reactivity as acceptors for peptidyl transferase. The chain is Elongation factor P from Pelotomaculum thermopropionicum (strain DSM 13744 / JCM 10971 / SI).